We begin with the raw amino-acid sequence, 311 residues long: tRNA dimethylallyltransferase 2 (311 aa).

15 to 22 (GPTAVGKT) lines the ATP pocket. 17 to 22 (TAVGKT) serves as a coordination point for substrate. The tract at residues 40–43 (DSMQ) is interaction with substrate tRNA.

It belongs to the IPP transferase family. As to quaternary structure, monomer. It depends on Mg(2+) as a cofactor.

It carries out the reaction adenosine(37) in tRNA + dimethylallyl diphosphate = N(6)-dimethylallyladenosine(37) in tRNA + diphosphate. Functionally, catalyzes the transfer of a dimethylallyl group onto the adenine at position 37 in tRNAs that read codons beginning with uridine, leading to the formation of N6-(dimethylallyl)adenosine (i(6)A). This chain is tRNA dimethylallyltransferase 2, found in Syntrophus aciditrophicus (strain SB).